The primary structure comprises 255 residues: Envelope glycoprotein E (255 aa).

Residues 1-110 are Virion surface-facing; it reads GSTWPSRCHS…QELGAWTRHY (110 aa). Residues 111–131 traverse the membrane as a helical segment; sequence LAFLLIIICTCAALLIALVVW. At 132–255 the chain is on the intravirion side; the sequence is GCILYIRSNR…VASKLRSILK (124 aa). The short motif at 154 to 157 is the Internalization motif element; that stretch reads YTSV. Positions 173 to 187 are acidic; it reads ASDSDDSFDSSSDEE. Acidic residues predominate over residues 176-189; it reads SDDSFDSSSDEELE. Disordered stretches follow at residues 176 to 210 and 223 to 245; these read SDDS…SADA and DTPE…DYSK.

Belongs to the alphaherpesvirinae glycoprotein E family. Interacts with gI. Post-translationally, phosphorylated on serines within the acidic cluster. Phosphorylation determines whether endocytosed viral gE traffics to the trans-Golgi network or recycles to the cell membrane.

It localises to the virion membrane. Its subcellular location is the host cell membrane. The protein localises to the host cell junction. The protein resides in the host Golgi apparatus membrane. It is found in the host endosome membrane. Functionally, in epithelial cells, the heterodimer gE/gI is required for the cell-to-cell spread of the virus, by sorting nascent virions to cell junctions. Once the virus reaches the cell junctions, virus particles can spread to adjacent cells extremely rapidly through interactions with cellular receptors that accumulate at these junctions. Implicated in basolateral spread in polarized cells. In neuronal cells, gE/gI is essential for the anterograde spread of the infection throughout the host nervous system. Together with US9, the heterodimer gE/gI is involved in the sorting and transport of viral structural components toward axon tips. This Equus caballus (Horse) protein is Envelope glycoprotein E (gE).